Consider the following 1152-residue polypeptide: DNA-directed RNA polymerase subunit beta' (1152 aa).

The Zn(2+) site is built by Cys60, Cys62, Cys75, and Cys78. The Mg(2+) site is built by Asp449, Asp451, and Asp453. Zn(2+) contacts are provided by Cys779, Cys853, Cys860, and Cys863.

Belongs to the RNA polymerase beta' chain family. As to quaternary structure, the RNAP catalytic core consists of 2 alpha, 1 beta, 1 beta' and 1 omega subunit. When a sigma factor is associated with the core the holoenzyme is formed, which can initiate transcription. It depends on Mg(2+) as a cofactor. Requires Zn(2+) as cofactor.

The enzyme catalyses RNA(n) + a ribonucleoside 5'-triphosphate = RNA(n+1) + diphosphate. In terms of biological role, DNA-dependent RNA polymerase catalyzes the transcription of DNA into RNA using the four ribonucleoside triphosphates as substrates. The chain is DNA-directed RNA polymerase subunit beta' from Carboxydothermus hydrogenoformans (strain ATCC BAA-161 / DSM 6008 / Z-2901).